Consider the following 147-residue polypeptide: SsrA-binding protein (147 aa).

Belongs to the SmpB family.

The protein localises to the cytoplasm. Functionally, required for rescue of stalled ribosomes mediated by trans-translation. Binds to transfer-messenger RNA (tmRNA), required for stable association of tmRNA with ribosomes. tmRNA and SmpB together mimic tRNA shape, replacing the anticodon stem-loop with SmpB. tmRNA is encoded by the ssrA gene; the 2 termini fold to resemble tRNA(Ala) and it encodes a 'tag peptide', a short internal open reading frame. During trans-translation Ala-aminoacylated tmRNA acts like a tRNA, entering the A-site of stalled ribosomes, displacing the stalled mRNA. The ribosome then switches to translate the ORF on the tmRNA; the nascent peptide is terminated with the 'tag peptide' encoded by the tmRNA and targeted for degradation. The ribosome is freed to recommence translation, which seems to be the essential function of trans-translation. The sequence is that of SsrA-binding protein from Mycoplasmopsis fermentans (strain ATCC 19989 / NBRC 14854 / NCTC 10117 / PG18) (Mycoplasma fermentans).